The primary structure comprises 149 residues: uncharacterized protein (149 aa).

In terms of domain architecture, N-acetyltransferase spans 1-149; that stretch reads MNIRQAKTSD…VHYCLNVPAK (149 aa).

The protein belongs to the acetyltransferase family.

This is an uncharacterized protein from Bacillus subtilis (strain 168).